Here is a 441-residue protein sequence, read N- to C-terminus: Damage-control phosphatase ARMT1 (441 aa).

The residue at position 2 (alanine 2) is an N-acetylalanine. Lysine 40 is modified (N6-acetyllysine). Serine 102 carries the phosphoserine modification. The Mn(2+) site is built by aspartate 253 and asparagine 254. Position 253 to 254 (253 to 254) interacts with substrate; that stretch reads DN. Residues glutamate 258 and aspartate 291 each coordinate S-adenosyl-L-methionine. Residue aspartate 291 participates in Mn(2+) binding. Residues 367-371 and lysine 404 contribute to the substrate site; that span reads DLNYR. Residues 401-404 carry the Subfamily III RTxK motif motif; that stretch reads RTLK.

Belongs to the damage-control phosphatase family. Sugar phosphate phosphatase III subfamily. It depends on Mn(2+) as a cofactor. Ni(2+) is required as a cofactor. In terms of processing, automethylated.

The catalysed reaction is beta-D-fructose 1-phosphate + H2O = D-fructose + phosphate. The enzyme catalyses beta-D-fructose 6-phosphate = dihydroxyacetone + D-glyceraldehyde 3-phosphate. It catalyses the reaction L-glutamyl-[protein] + S-adenosyl-L-methionine = [protein]-L-glutamate 5-O-methyl ester + S-adenosyl-L-homocysteine. In terms of biological role, metal-dependent phosphatase that shows phosphatase activity against several substrates, including fructose-1-phosphate and fructose-6-phosphate. Its preference for fructose-1-phosphate, a strong glycating agent that causes DNA damage rather than a canonical yeast metabolite, suggests a damage-control function in hexose phosphate metabolism. Has also been shown to have O-methyltransferase activity that methylates glutamate residues of target proteins to form gamma-glutamyl methyl ester residues. Possibly methylates PCNA, suggesting it is involved in the DNA damage response. The sequence is that of Damage-control phosphatase ARMT1 from Bos taurus (Bovine).